The primary structure comprises 155 residues: Antitoxin HicB 1 (155 aa).

In terms of domain architecture, HTH cro/C1-type spans 99–153 (MLNAFLDSKLTQIELANRMGVKKQEVTRIFDLRHSTKIDTVGKVASAIGHQLTLS). The segment at residues 110-129 (QIELANRMGVKKQEVTRIFD) is a DNA-binding region (H-T-H motif).

Belongs to the HicB antitoxin family. In terms of assembly, probably forms a complex with the probable mRNA interferase HicA1 (its cognate toxin); when complexed with HicA 1 inhibits the toxin activity.

Antitoxin component of a type II toxin-antitoxin (TA) system. Functions as an mRNA interferase antitoxin preventing effects of the HicA 1 toxin. This chain is Antitoxin HicB 1 (hicB1), found in Photorhabdus laumondii subsp. laumondii (strain DSM 15139 / CIP 105565 / TT01) (Photorhabdus luminescens subsp. laumondii).